We begin with the raw amino-acid sequence, 284 residues long: 4-diphosphocytidyl-2-C-methyl-D-erythritol kinase (284 aa).

Residue K14 is part of the active site. 98-108 (PMGGGIGGGSS) contributes to the ATP binding site. The active site involves D140.

The protein belongs to the GHMP kinase family. IspE subfamily.

It catalyses the reaction 4-CDP-2-C-methyl-D-erythritol + ATP = 4-CDP-2-C-methyl-D-erythritol 2-phosphate + ADP + H(+). It participates in isoprenoid biosynthesis; isopentenyl diphosphate biosynthesis via DXP pathway; isopentenyl diphosphate from 1-deoxy-D-xylulose 5-phosphate: step 3/6. Its function is as follows. Catalyzes the phosphorylation of the position 2 hydroxy group of 4-diphosphocytidyl-2C-methyl-D-erythritol. The sequence is that of 4-diphosphocytidyl-2-C-methyl-D-erythritol kinase from Shewanella loihica (strain ATCC BAA-1088 / PV-4).